Reading from the N-terminus, the 232-residue chain is Succinyl-CoA:3-ketoacid coenzyme A transferase subunit A (232 aa).

24–30 (GGFGLCG) is a CoA binding site.

It belongs to the 3-oxoacid CoA-transferase subunit A family. In terms of assembly, heterodimer of a subunit A and a subunit B.

The enzyme catalyses a 3-oxo acid + succinyl-CoA = a 3-oxoacyl-CoA + succinate. This is Succinyl-CoA:3-ketoacid coenzyme A transferase subunit A (scoA) from Helicobacter pylori (strain ATCC 700392 / 26695) (Campylobacter pylori).